Consider the following 495-residue polypeptide: E3 ubiquitin-protein ligase RAD18 (495 aa).

Met1 is subject to N-acetylmethionine. The RING-type zinc-finger motif lies at 25-64 (CGICFEYFNIAMIIPQCSHNYCSLCIRKFLSYKTQCPTCC). Residues Ser99 and Ser103 each carry the phosphoserine modification. Residue Thr118 is modified to Phosphothreonine. Residues Ser122, Ser125, Ser142, Ser158, and Ser164 each carry the phosphoserine modification. The tract at residues 152–197 (ENKSKFSPQKEASPAAKTKETRSVEEIAPDPSEAKRPEPPSTSTLK) is disordered. The segment at 201–228 (KVDCPVCGVNIPESHINKHLDSCLSREE) adopts a UBZ4-type zinc-finger fold. Residues Cys204, Cys207, His219, and Cys223 each coordinate Zn(2+). Residues 232–240 (SLRSSVHKR) carry the LR motif motif. Residues 248 to 282 (YNLLSDRDLKKKLKEHGLSIQGNKQQLIKRHQEFV) form the SAP domain. Residue Ser322 is modified to Phosphoserine. Residue Lys376 forms a Glycyl lysine isopeptide (Lys-Gly) (interchain with G-Cter in SUMO2) linkage. Disordered regions lie at residues 400–423 (NHFS…DSSS) and 456–495 (AWEA…RNRN). Residues 410–421 (PEELEPDREEDS) are compositionally biased toward acidic residues. Phosphoserine occurs at positions 471 and 483. Over residues 479–495 (RAAESAEIEPRNKRNRN) the composition is skewed to basic and acidic residues.

This sequence belongs to the RAD18 family. Homodimer. Interacts with UBE2A and UBE2B, one homodimer binding one molecule of UBE2B. Interacts with SHPRH. Interacts with HLTF. Interacts with SPRTN; leading to enhance chromatin association of RAD18 and RAD18-mediated PCNA ubiquitination and translesion DNA synthesis. Interacts (via C-terminus and phosphorylated form) with SLF1 (via BRCT domains); this interaction is required for efficient repair of UV-induced DNA damage. Interacts with SLF2. Interacts with SMC5; this interaction is increased in a SLF1 or SLF2-dependent manner. Interacts with DNA damage up-regulated protein DDUP. Forms a complex with DDUP and H2AX following DDUP phosphorylation.

It is found in the nucleus. The protein localises to the cytoplasm. Its subcellular location is the cytoskeleton. It localises to the microtubule organizing center. The protein resides in the centrosome. It carries out the reaction S-ubiquitinyl-[E2 ubiquitin-conjugating enzyme]-L-cysteine + [acceptor protein]-L-lysine = [E2 ubiquitin-conjugating enzyme]-L-cysteine + N(6)-ubiquitinyl-[acceptor protein]-L-lysine.. The protein operates within protein modification; protein ubiquitination. Functionally, E3 ubiquitin-protein ligase involved in postreplication repair of UV-damaged DNA. Postreplication repair functions in gap-filling of a daughter strand on replication of damaged DNA. Associates to the E2 ubiquitin conjugating enzyme UBE2B to form the UBE2B-RAD18 ubiquitin ligase complex involved in mono-ubiquitination of DNA-associated PCNA on 'Lys-164'. Has ssDNA binding activity. The protein is E3 ubiquitin-protein ligase RAD18 (RAD18) of Homo sapiens (Human).